Reading from the N-terminus, the 100-residue chain is Urease subunit gamma (100 aa).

It belongs to the urease gamma subunit family. As to quaternary structure, heterotrimer of UreA (gamma), UreB (beta) and UreC (alpha) subunits. Three heterotrimers associate to form the active enzyme.

It is found in the cytoplasm. The catalysed reaction is urea + 2 H2O + H(+) = hydrogencarbonate + 2 NH4(+). Its pathway is nitrogen metabolism; urea degradation; CO(2) and NH(3) from urea (urease route): step 1/1. This Yersinia aldovae protein is Urease subunit gamma.